The sequence spans 222 residues: Niacin transporter NiaX (222 aa).

Helical transmembrane passes span 34–54, 72–94, 101–120, 135–155, and 167–187; these read NLIIAAMLTALGILIPMMMPV, MAAMFFSPLMTAFVALGTTLGFM, TIWLRALMHLPVMTVGAYVL, IFNFILGIFHAGLETLVVYAF, and ALLNFLLLIALGGLVHSMIDF.

Belongs to the vitamin uptake transporter (VUT/ECF) (TC 2.A.88) family. In L.lactis forms a stable complex with EcfA, EcfA' and EcfT. In E.coli forms a stable energy-coupling factor (ECF) transporter complex composed of 2 membrane-embedded substrate-binding proteins (S component), 2 ATP-binding proteins (A and A' components) and 2 transmembrane proteins (T component), probably with a stoichiometry of 2:1:1:2. May be able to interact with more than 1 S component at a time.

It is found in the cell membrane. Probably a niacin-binding protein that interacts with the energy-coupling factor (ECF) ABC-transporter complex. Unlike classic ABC transporters this ECF transporter provides the energy necessary to transport a number of different substrates. The substrates themselves are bound by transmembrane, not extracytoplasmic soluble proteins. Uptake of niacin into proteosomes containing EcfA1A2T and Niax has been demonstrated. Uptake requires hydrolyzable Mg-ATP and is substrate-specific; NiaX-containing proteosomes did not transport riboflavin. This is Niacin transporter NiaX (niaX) from Lactococcus lactis subsp. cremoris (strain MG1363).